Here is a 553-residue protein sequence, read N- to C-terminus: Putative polyamine transporter (553 aa).

Helical transmembrane passes span 43–63 (WSIF…AACF), 68–88 (LVVG…TSVA), 133–153 (ITAA…LHSF), 163–183 (AQIF…ACFP), 190–210 (FSSA…IMIL), 240–260 (WPTG…MSGY), 280–300 (AIVL…IAIA), 333–353 (VIGA…NCLL), 397–417 (LLLL…SIGA), 453–473 (IGWV…FPTV), and 485–505 (WTCL…VVYA).

It belongs to the amino acid-polyamine-organocation (APC) superfamily.

Its subcellular location is the membrane. This chain is Putative polyamine transporter (GPT1), found in Candida albicans (Yeast).